The following is a 234-amino-acid chain: Fibroblast growth factor-binding protein 1 (234 aa).

Residues 1–23 (MRTHGLTLLSLLLLAVPMLLVEA) form the signal peptide. The tract at residues 25–59 (KEGRNRRGSKASADESLALGKPGKEPRSQPTNYPI) is disordered. 3 disulfide bridges follow: Cys71–Cys88, Cys97–Cys130, and Cys106–Cys142. N-linked (GlcNAc...) asparagine glycosylation occurs at Asn155. The tract at residues 169–200 (MEPSPMDTVEVTTSSSPEKTQTMATKDPQCEE) is disordered. A glycan (O-linked (GalNAc...) serine) is linked at Ser172. Residues 178-192 (EVTTSSSPEKTQTMA) show a composition bias toward polar residues. Positions 194 to 234 (KDPQCEEEDLKNQRKAALEYCGETWGSLCNFFLSMVQGSSC) are sufficient for interaction with FGF2 and FGF2-induced effects. Disulfide bonds link Cys198–Cys234 and Cys214–Cys222.

This sequence belongs to the fibroblast growth factor-binding protein family. Found in a complex with FGFBP1, FGF1 and FGF2. Interacts with FGF1, FGF7, FGF10, FGF22 and HSPG2. Interacts with FGF2.

Its subcellular location is the secreted. The protein localises to the extracellular space. It is found in the cell membrane. Acts as a carrier protein that release fibroblast-binding factors (FGFs) from the extracellular matrix (EM) storage and thus enhance the mitogenic activity of FGFs. Enhances FGF2 signaling during tissue repair, angiogenesis and in tumor growth. In Bos taurus (Bovine), this protein is Fibroblast growth factor-binding protein 1 (FGFBP1).